Reading from the N-terminus, the 339-residue chain is Methylthioribose-1-phosphate isomerase (339 aa).

Substrate-binding positions include 50 to 52 (RGA), Arg-84, and Gln-186. Residue Asp-227 is the Proton donor of the active site. Substrate is bound at residue 237–238 (NK).

The protein belongs to the eIF-2B alpha/beta/delta subunits family. MtnA subfamily.

It carries out the reaction 5-(methylsulfanyl)-alpha-D-ribose 1-phosphate = 5-(methylsulfanyl)-D-ribulose 1-phosphate. It participates in amino-acid biosynthesis; L-methionine biosynthesis via salvage pathway; L-methionine from S-methyl-5-thio-alpha-D-ribose 1-phosphate: step 1/6. Functionally, catalyzes the interconversion of methylthioribose-1-phosphate (MTR-1-P) into methylthioribulose-1-phosphate (MTRu-1-P). The polypeptide is Methylthioribose-1-phosphate isomerase (Sulfurihydrogenibium sp. (strain YO3AOP1)).